The sequence spans 954 residues: Calsyntenin-1 (954 aa).

The first 25 residues, 1–25 (MRIRGVKPFASAVGLLLGLLYAVDA), serve as a signal peptide directing secretion. Topologically, residues 26–833 (AKVNKHKPWI…THQASVVPSA (808 aa)) are extracellular. 2 consecutive Cadherin domains span residues 35-151 (IETT…SPVF) and 152-252 (KEKS…KPSW). N-linked (GlcNAc...) asparagine glycans are attached at residues Asn333, Asn353, and Asn552. The helical transmembrane segment at 834 to 854 (ATIVIVVCVSFLVFMIILGVF) threads the bilayer. Topologically, residues 855–954 (RIRAAHQRTM…LEWDDSTLTY (100 aa)) are cytoplasmic. Positions 891–954 (TYEDQHSSEE…LEWDDSTLTY (64 aa)) are disordered. A compositionally biased stretch (acidic residues) spans 900 to 935 (EEGDEEEEESEDGEEEDDITSAESDSSEDEAGEQED).

This sequence belongs to the calsyntenin family. As to quaternary structure, homooligomer and heterooligomer; mediates both homophilic and heterophilc interactions with clstn2 and clstn3 paralogs via cadherin domains. In terms of tissue distribution, by 48 hours post-fertilization (hpf), widely expressed in the brain, with strong expression in the telencephalon and the midbrain.

The protein resides in the postsynaptic cell membrane. The protein localises to the endoplasmic reticulum membrane. Its subcellular location is the golgi apparatus membrane. It localises to the cell projection. It is found in the neuron projection. Postsynaptic adhesion molecule involved in vesicle trafficking; required for branching of peripheral but not central axons of sensory neurons. Promotes synapse development by acting as a cell adhesion molecule at the postsynaptic membrane, which associates with presynaptic neurexins. This is Calsyntenin-1 from Danio rerio (Zebrafish).